Here is a 50-residue protein sequence, read N- to C-terminus: Insulin (50 aa).

Cystine bridges form between cysteine 7/cysteine 36, cysteine 19/cysteine 49, and cysteine 35/cysteine 40.

Belongs to the insulin family. Heterodimer of a B chain and an A chain linked by two disulfide bonds.

It is found in the secreted. Functionally, insulin decreases blood glucose concentration. It increases cell permeability to monosaccharides, amino acids and fatty acids. It accelerates glycolysis, the pentose phosphate cycle, and glycogen synthesis in liver. This Katsuwonus pelamis (Skipjack tuna) protein is Insulin (ins).